The primary structure comprises 359 residues: Mannose-1-phosphate guanylyltransferase (359 aa).

Belongs to the transferase hexapeptide repeat family.

The enzyme catalyses alpha-D-mannose 1-phosphate + GTP + H(+) = GDP-alpha-D-mannose + diphosphate. It functions in the pathway cell wall biogenesis. Its pathway is nucleotide-sugar biosynthesis; GDP-alpha-D-mannose biosynthesis; GDP-alpha-D-mannose from alpha-D-mannose 1-phosphate (GTP route): step 1/1. Functionally, catalyzes the formation of GDP-mannose from D-mannose-1-phosphate and GTP. Plays an important role in the synthesis of different glycoconjugates which are responsible for cell wall structure, virulence and immunomodulatory activity of M.tuberculosis. This Mycobacterium tuberculosis (strain ATCC 25618 / H37Rv) protein is Mannose-1-phosphate guanylyltransferase.